A 143-amino-acid polypeptide reads, in one-letter code: Histone H2B (143 aa).

The tract at residues Met-1–Glu-52 is disordered. An N6-acetyllysine; alternate modification is found at Lys-11. Lys-11 participates in a covalent cross-link: Glycyl lysine isopeptide (Lys-Gly) (interchain with G-Cter in SUMO); alternate. Ser-15 bears the Phosphoserine mark. Residue Lys-19 is modified to N6-acetyllysine. Residues Lys-23–Ala-39 are compositionally biased toward low complexity. Residue Lys-137 forms a Glycyl lysine isopeptide (Lys-Gly) (interchain with G-Cter in ubiquitin) linkage.

The protein belongs to the histone H2B family. In terms of assembly, the nucleosome is a histone octamer containing two molecules each of H2A, H2B, H3 and H4 assembled in one H3-H4 heterotetramer and two H2A-H2B heterodimers. The octamer wraps approximately 147 bp of DNA. Post-translationally, monoubiquitinated to form H2BK123ub1. H2BK123ub1 gives a specific tag for epigenetic transcriptional activation and is also prerequisite for H3K4me and H3K79me formation. H2BK123ub1 also modulates the formation of double-strand breaks during meiosis and is a prerequisite for DNA-damage checkpoint activation. Phosphorylated to form H2BS10ph during progression through meiotic prophase. May be correlated with chromosome condensation. In terms of processing, acetylation of N-terminal lysines and particularly formation of H2BK11ac has a positive effect on transcription. Post-translationally, sumoylation to form H2BK6su occurs preferentially near the telomeres and represses gene transcription.

Its subcellular location is the nucleus. The protein localises to the chromosome. Functionally, core component of nucleosome. Nucleosomes wrap and compact DNA into chromatin, limiting DNA accessibility to the cellular machineries which require DNA as a template. Histones thereby play a central role in transcription regulation, DNA repair, DNA replication and chromosomal stability. DNA accessibility is regulated via a complex set of post-translational modifications of histones, also called histone code, and nucleosome remodeling. This chain is Histone H2B (htbA), found in Agaricus bisporus (White button mushroom).